A 100-amino-acid chain; its full sequence is Bombyxin A-2 homolog (100 aa).

A signal peptide spans 1 to 18; it reads MRTQVLFLIVVLAVMASG. 3 disulfide bridges follow: C26–C85, C38–C98, and C84–C89. Positions 47 to 75 are cleaved as a propeptide — c peptide like; it reads PPYISSENEGYGWKWLERQRARQLDEARG.

This sequence belongs to the insulin family. Heterodimer of a B chain and an A chain linked by two disulfide bonds.

Its subcellular location is the secreted. Functionally, brain peptide responsible for activation of prothoracic glands to produce ecdysone in insects. The chain is Bombyxin A-2 homolog (SBXA2) from Samia cynthia (Ailanthus silkmoth).